Consider the following 1019-residue polypeptide: TOG array regulator of axonemal microtubules protein 2 (1019 aa).

Disordered stretches follow at residues 28–54 (AGPRVLPPGSINSSLPHGEGSLQPEPR), 131–158 (RRLSEGLAASSRASLDPGGGPQGVPLHS), 249–311 (TPSR…AKKP), and 991–1019 (SLGGSRKATDRGVAPDSKTTGSSYPFQLD). The span at 1007-1019 (SKTTGSSYPFQLD) shows a compositional bias: polar residues.

The protein belongs to the Crescerin family.

This Homo sapiens (Human) protein is TOG array regulator of axonemal microtubules protein 2.